The sequence spans 587 residues: Arginine--tRNA ligase (587 aa).

The 'HIGH' region signature appears at 126-136 (ANPTGPLHVGH).

This sequence belongs to the class-I aminoacyl-tRNA synthetase family. As to quaternary structure, monomer.

The protein resides in the cytoplasm. It carries out the reaction tRNA(Arg) + L-arginine + ATP = L-arginyl-tRNA(Arg) + AMP + diphosphate. The chain is Arginine--tRNA ligase from Aromatoleum aromaticum (strain DSM 19018 / LMG 30748 / EbN1) (Azoarcus sp. (strain EbN1)).